We begin with the raw amino-acid sequence, 467 residues long: 3-isopropylmalate dehydratase large subunit (467 aa).

[4Fe-4S] cluster contacts are provided by Cys-349, Cys-409, and Cys-412.

The protein belongs to the aconitase/IPM isomerase family. LeuC type 1 subfamily. In terms of assembly, heterodimer of LeuC and LeuD. The cofactor is [4Fe-4S] cluster.

It catalyses the reaction (2R,3S)-3-isopropylmalate = (2S)-2-isopropylmalate. Its pathway is amino-acid biosynthesis; L-leucine biosynthesis; L-leucine from 3-methyl-2-oxobutanoate: step 2/4. Functionally, catalyzes the isomerization between 2-isopropylmalate and 3-isopropylmalate, via the formation of 2-isopropylmaleate. The sequence is that of 3-isopropylmalate dehydratase large subunit from Ruegeria sp. (strain TM1040) (Silicibacter sp.).